Consider the following 275-residue polypeptide: MGIKRYKPTSPGRRGMTVSDFAEITKFEPEKSLTEPLKKHAGRNNHGHITTRHRGGGHKRRYRLIDFKRKKFDIPAKVAGIEYDPNRSANIALLHYTDGEKRYIIAPLGLKVGDTLMAGPNAEIRVGNALPLANIPIGSQIHNIELTPGRGGQLVRSAGNTAQLMAREGNYATVRLPSGEMRMVHIKCMATLGQVGNVDHQNIMIGKAGRSRWLGRRPVVRGSAMNPVDHPHGGGEGRAPTGMNPKTKWGKPAMGKKTRHNPRTQRFIVRTRKQK.

2 disordered regions span residues 38-59 (KKHA…GGHK) and 222-275 (GSAM…RKQK). Basic residues-rich tracts occupy residues 39-59 (KHAG…GGHK) and 254-275 (MGKK…RKQK).

The protein belongs to the universal ribosomal protein uL2 family. In terms of assembly, part of the 50S ribosomal subunit. Forms a bridge to the 30S subunit in the 70S ribosome.

Its function is as follows. One of the primary rRNA binding proteins. Required for association of the 30S and 50S subunits to form the 70S ribosome, for tRNA binding and peptide bond formation. It has been suggested to have peptidyltransferase activity; this is somewhat controversial. Makes several contacts with the 16S rRNA in the 70S ribosome. The protein is Large ribosomal subunit protein uL2 of Herpetosiphon aurantiacus (strain ATCC 23779 / DSM 785 / 114-95).